Reading from the N-terminus, the 672-residue chain is UvrABC system protein B (672 aa).

Residues 26-181 (AGLEDGLAYQ…ILQRLAELQY (156 aa)) form the Helicase ATP-binding domain. 39-46 (GVTGSGKT) is an ATP binding site. The short motif at 92–115 (YYDYYQPEAYVPSSDTYIEKDASI) is the Beta-hairpin element. A Helicase C-terminal domain is found at 430 to 592 (QVDDLLSEIK…ITPKSIQKAV (163 aa)). A UVR domain is found at 631–666 (AKELRKLEEQMYHHARNLEFEEAAAVRDKIQHIRKG).

The protein belongs to the UvrB family. In terms of assembly, forms a heterotetramer with UvrA during the search for lesions. Interacts with UvrC in an incision complex.

Its subcellular location is the cytoplasm. The UvrABC repair system catalyzes the recognition and processing of DNA lesions. A damage recognition complex composed of 2 UvrA and 2 UvrB subunits scans DNA for abnormalities. Upon binding of the UvrA(2)B(2) complex to a putative damaged site, the DNA wraps around one UvrB monomer. DNA wrap is dependent on ATP binding by UvrB and probably causes local melting of the DNA helix, facilitating insertion of UvrB beta-hairpin between the DNA strands. Then UvrB probes one DNA strand for the presence of a lesion. If a lesion is found the UvrA subunits dissociate and the UvrB-DNA preincision complex is formed. This complex is subsequently bound by UvrC and the second UvrB is released. If no lesion is found, the DNA wraps around the other UvrB subunit that will check the other stand for damage. In Coxiella burnetii (strain CbuG_Q212) (Coxiella burnetii (strain Q212)), this protein is UvrABC system protein B.